The chain runs to 299 residues: Protease HtpX homolog (299 aa).

2 helical membrane passes run Ile5 to Val25 and Met44 to Ala64. Position 155 (His155) interacts with Zn(2+). Glu156 is a catalytic residue. Residue His159 coordinates Zn(2+). 2 consecutive transmembrane segments (helical) span residues Leu170–Ala190 and Phe205–Ala225. Glu231 is a binding site for Zn(2+).

This sequence belongs to the peptidase M48B family. Zn(2+) is required as a cofactor.

The protein localises to the cell membrane. In Bacillus pumilus (strain SAFR-032), this protein is Protease HtpX homolog.